The following is a 270-amino-acid chain: 3-phenylpropionate-dihydrodiol/cinnamic acid-dihydrodiol dehydrogenase (270 aa).

10–34 is an NAD(+) binding site; it reads FITGGGSGLGLALVERFIEEGAQVA. Ser-143 is a substrate binding site. Tyr-156 acts as the Proton acceptor in catalysis.

This sequence belongs to the short-chain dehydrogenases/reductases (SDR) family.

It catalyses the reaction 3-(cis-5,6-dihydroxycyclohexa-1,3-dien-1-yl)propanoate + NAD(+) = 3-(2,3-dihydroxyphenyl)propanoate + NADH + H(+). The enzyme catalyses (2E)-3-(cis-5,6-dihydroxycyclohexa-1,3-dien-1-yl)prop-2-enoate + NAD(+) = (2E)-3-(2,3-dihydroxyphenyl)prop-2-enoate + NADH + H(+). It functions in the pathway aromatic compound metabolism; 3-phenylpropanoate degradation. Converts 3-phenylpropionate-dihydrodiol (PP-dihydrodiol) and cinnamic acid-dihydrodiol (CI-dihydrodiol) into 3-(2,3-dihydroxylphenyl)propanoic acid (DHPP) and 2,3-dihydroxicinnamic acid (DHCI), respectively. The polypeptide is 3-phenylpropionate-dihydrodiol/cinnamic acid-dihydrodiol dehydrogenase (Escherichia coli (strain ATCC 8739 / DSM 1576 / NBRC 3972 / NCIMB 8545 / WDCM 00012 / Crooks)).